The chain runs to 218 residues: MFGHNSKVDLELNREVEKLIKTGGKEKIMPIVQAGEPVLRQQTIAYDGQLSRKTLDKLIDTMRTTMLEAPGVGLAATQIGLGLALAVVEDHVCEGDDGDPREAAEFPFHAIINPSYEPIGTETRSFYEGCLSFDGYQAVRKRWLDITARWQDEDGNKHEEHLHGWPARIFQHETDHLSGELYIDQAEIRSLTTNENLEDFWCEDPVPTEAAAELGFEL.

Residues Cys130 and His172 each coordinate Fe cation. Residue Glu173 is part of the active site. His176 lines the Fe cation pocket.

This sequence belongs to the polypeptide deformylase family. Requires Fe(2+) as cofactor.

It carries out the reaction N-terminal N-formyl-L-methionyl-[peptide] + H2O = N-terminal L-methionyl-[peptide] + formate. Functionally, removes the formyl group from the N-terminal Met of newly synthesized proteins. Requires at least a dipeptide for an efficient rate of reaction. N-terminal L-methionine is a prerequisite for activity but the enzyme has broad specificity at other positions. This is Peptide deformylase from Bifidobacterium adolescentis (strain ATCC 15703 / DSM 20083 / NCTC 11814 / E194a).